The sequence spans 208 residues: Guanylate kinase (208 aa).

Residues 4-184 enclose the Guanylate kinase-like domain; sequence GTLYIVSAPS…ALMDFKAIIR (181 aa). 11–18 lines the ATP pocket; sequence APSGAGKS.

This sequence belongs to the guanylate kinase family.

It is found in the cytoplasm. The enzyme catalyses GMP + ATP = GDP + ADP. Its function is as follows. Essential for recycling GMP and indirectly, cGMP. This Photobacterium profundum (strain SS9) protein is Guanylate kinase.